The sequence spans 758 residues: 5-methyltetrahydropteroyltriglutamate--homocysteine methyltransferase (758 aa).

Residues 16–19 and lysine 112 contribute to the 5-methyltetrahydropteroyltri-L-glutamate site; that span reads RELK. L-homocysteine contacts are provided by residues 433–435 and glutamate 486; that span reads IGS. Residues 433–435 and glutamate 486 each bind L-methionine; that span reads IGS. 5-methyltetrahydropteroyltri-L-glutamate-binding positions include 517–518 and tryptophan 563; that span reads RC. Aspartate 601 provides a ligand contact to L-homocysteine. Residue aspartate 601 participates in L-methionine binding. Glutamate 607 contacts 5-methyltetrahydropteroyltri-L-glutamate. 3 residues coordinate Zn(2+): histidine 643, cysteine 645, and glutamate 667. Histidine 696 functions as the Proton donor in the catalytic mechanism. Cysteine 728 contributes to the Zn(2+) binding site.

This sequence belongs to the vitamin-B12 independent methionine synthase family. Zn(2+) is required as a cofactor.

The catalysed reaction is 5-methyltetrahydropteroyltri-L-glutamate + L-homocysteine = tetrahydropteroyltri-L-glutamate + L-methionine. Its pathway is amino-acid biosynthesis; L-methionine biosynthesis via de novo pathway; L-methionine from L-homocysteine (MetE route): step 1/1. Its function is as follows. Catalyzes the transfer of a methyl group from 5-methyltetrahydrofolate to homocysteine resulting in methionine formation. The chain is 5-methyltetrahydropteroyltriglutamate--homocysteine methyltransferase from Neisseria meningitidis serogroup C / serotype 2a (strain ATCC 700532 / DSM 15464 / FAM18).